We begin with the raw amino-acid sequence, 162 residues long: 2-amino-4-hydroxy-6-hydroxymethyldihydropteridine pyrophosphokinase (162 aa).

This sequence belongs to the HPPK family.

The catalysed reaction is 6-hydroxymethyl-7,8-dihydropterin + ATP = (7,8-dihydropterin-6-yl)methyl diphosphate + AMP + H(+). Its pathway is cofactor biosynthesis; tetrahydrofolate biosynthesis; 2-amino-4-hydroxy-6-hydroxymethyl-7,8-dihydropteridine diphosphate from 7,8-dihydroneopterin triphosphate: step 4/4. Catalyzes the transfer of pyrophosphate from adenosine triphosphate (ATP) to 6-hydroxymethyl-7,8-dihydropterin, an enzymatic step in folate biosynthesis pathway. In Streptococcus pyogenes serotype M3 (strain ATCC BAA-595 / MGAS315), this protein is 2-amino-4-hydroxy-6-hydroxymethyldihydropteridine pyrophosphokinase (folK).